The following is a 346-amino-acid chain: uncharacterized protein (346 aa).

Positions 1–28 (MFEWMKNKKAISPILALLIVLGVTIVVG) are cleaved as a signal peptide.

This is an uncharacterized protein from Methanocaldococcus jannaschii (strain ATCC 43067 / DSM 2661 / JAL-1 / JCM 10045 / NBRC 100440) (Methanococcus jannaschii).